A 296-amino-acid chain; its full sequence is Small ribosomal subunit protein uS2 (296 aa).

Disordered stretches follow at residues 1 to 24 (MNTK…TQSQ) and 270 to 296 (HELK…EASQ).

It belongs to the universal ribosomal protein uS2 family.

This is Small ribosomal subunit protein uS2 from Mycoplasmopsis synoviae (strain 53) (Mycoplasma synoviae).